Reading from the N-terminus, the 144-residue chain is Large ribosomal subunit protein uL11 (144 aa).

The protein belongs to the universal ribosomal protein uL11 family. In terms of assembly, part of the ribosomal stalk of the 50S ribosomal subunit. Interacts with L10 and the large rRNA to form the base of the stalk. L10 forms an elongated spine to which L12 dimers bind in a sequential fashion forming a multimeric L10(L12)X complex. Post-translationally, one or more lysine residues are methylated.

In terms of biological role, forms part of the ribosomal stalk which helps the ribosome interact with GTP-bound translation factors. The protein is Large ribosomal subunit protein uL11 of Legionella pneumophila (strain Paris).